The chain runs to 437 residues: Enolase (437 aa).

Gln-166 is a (2R)-2-phosphoglycerate binding site. Glu-208 acts as the Proton donor in catalysis. Mg(2+) contacts are provided by Asp-245, Glu-295, and Asp-322. Lys-347, Arg-376, Ser-377, and Lys-398 together coordinate (2R)-2-phosphoglycerate. Residue Lys-347 is the Proton acceptor of the active site.

Belongs to the enolase family. Mg(2+) serves as cofactor.

The protein localises to the cytoplasm. Its subcellular location is the secreted. It is found in the cell surface. The catalysed reaction is (2R)-2-phosphoglycerate = phosphoenolpyruvate + H2O. Its pathway is carbohydrate degradation; glycolysis; pyruvate from D-glyceraldehyde 3-phosphate: step 4/5. Catalyzes the reversible conversion of 2-phosphoglycerate (2-PG) into phosphoenolpyruvate (PEP). It is essential for the degradation of carbohydrates via glycolysis. This is Enolase from Lachnoclostridium phytofermentans (strain ATCC 700394 / DSM 18823 / ISDg) (Clostridium phytofermentans).